Reading from the N-terminus, the 470-residue chain is Argininosuccinate lyase (470 aa).

It belongs to the lyase 1 family. Argininosuccinate lyase subfamily.

It is found in the cytoplasm. The catalysed reaction is 2-(N(omega)-L-arginino)succinate = fumarate + L-arginine. It functions in the pathway amino-acid biosynthesis; L-arginine biosynthesis; L-arginine from L-ornithine and carbamoyl phosphate: step 3/3. This is Argininosuccinate lyase from Leptospira borgpetersenii serovar Hardjo-bovis (strain L550).